The sequence spans 247 residues: RNA-free ribonuclease P (247 aa).

Residues 223–247 (SPEGEKEKGEADKKKKSHSEEAEFI) are disordered.

It belongs to the HARP family.

It carries out the reaction Endonucleolytic cleavage of RNA, removing 5'-extranucleotides from tRNA precursor.. Functionally, RNA-free RNase P that catalyzes the removal of the 5'-leader sequence from pre-tRNA to produce the mature 5'-terminus. The chain is RNA-free ribonuclease P from Methanosarcina acetivorans (strain ATCC 35395 / DSM 2834 / JCM 12185 / C2A).